The chain runs to 92 residues: Small ribosomal subunit protein uS19 (92 aa).

It belongs to the universal ribosomal protein uS19 family.

Protein S19 forms a complex with S13 that binds strongly to the 16S ribosomal RNA. In Francisella philomiragia subsp. philomiragia (strain ATCC 25017 / CCUG 19701 / FSC 153 / O#319-036), this protein is Small ribosomal subunit protein uS19.